The sequence spans 201 residues: Small ribosomal subunit protein uS4 (201 aa).

The tract at residues 1–42 (MARYTGPATRKSRRLGVDLVGGDQSFEKRPYPPGQHGRARIK) is disordered. One can recognise an S4 RNA-binding domain in the interval 91 to 157 (SRLDNVVYRA…LPFQIARETA (67 aa)).

The protein belongs to the universal ribosomal protein uS4 family. As to quaternary structure, part of the 30S ribosomal subunit. Contacts protein S5. The interaction surface between S4 and S5 is involved in control of translational fidelity.

Functionally, one of the primary rRNA binding proteins, it binds directly to 16S rRNA where it nucleates assembly of the body of the 30S subunit. In terms of biological role, with S5 and S12 plays an important role in translational accuracy. The sequence is that of Small ribosomal subunit protein uS4 from Mycolicibacterium smegmatis (strain ATCC 700084 / mc(2)155) (Mycobacterium smegmatis).